The primary structure comprises 115 residues: U3-lycotoxin-Ls1f (115 aa).

The signal sequence occupies residues 1-20 (MKFVLLFGVLLVTLFSYSSA). Positions 21–44 (EMLDDFDQADEDELLSLIEKEEAR) are excised as a propeptide. Intrachain disulfides connect cysteine 48–cysteine 63, cysteine 55–cysteine 72, cysteine 62–cysteine 87, and cysteine 74–cysteine 85.

The protein belongs to the neurotoxin 19 (CSTX) family. 01 subfamily. Expressed by the venom gland.

The protein localises to the secreted. This chain is U3-lycotoxin-Ls1f, found in Lycosa singoriensis (Wolf spider).